A 345-amino-acid chain; its full sequence is Delta(6)-protoilludene synthase (345 aa).

Residues Asp-84, Asn-220, Ser-224, and Glu-228 each coordinate Mg(2+). The short motif at 84–88 (DEYSD) is the DDXXD motif element. (2E,6E)-farnesyl diphosphate-binding residues include Arg-309 and Tyr-310.

It belongs to the terpene synthase family. In terms of assembly, monomer. Mg(2+) is required as a cofactor.

It catalyses the reaction (2E,6E)-farnesyl diphosphate = Delta(6)-protoilludene + diphosphate. The protein operates within secondary metabolite biosynthesis. Its function is as follows. Delta(6)-protoilludene synthase, part of the gene cluster that mediates the biosynthesis of melleolides, a range of antifungal and phytotoxic polyketide derivatives composed of an orsellinic acid (OA) moiety esterified to various sesquiterpene alcohols. The first step in melleolides biosynthesis is performed by the delta(6)-protoilludene synthase PRO1 which catalyzes the cyclization of farnesyl diphosphate to protoilludene. The orsellinic acid synthase armB produces OA by condensing acetyl-CoA with 3 malonyl-CoA units in a three-round chain elongation reaction folowed by a C2-C7 ring closure. ArmB further catalyzes the trans-esterification of OA to the various sesquiterpene alcohols resulting from the hydroxylation of protoilludene. The melleolides cluster also includes 5 cytochrome P450 monooxygenases, 4 NAD(+)-dependent oxidoreductases, one flavin-dependent oxidoreductase, and one O-methyltransferase. The cytochrome P450 monooxygenases may be involved in protoilludene hydroxylation to elaborate melleolides with multiple alcohol groups, such as melleolide D, which carries alcohol functionalities at C-4, C-5, C-10, and C-13. The role of the NAD(+)-dependent enzymes remains unknown. Numerous melleolides, including arnamial, show 5'-O-methylation of the aromatic moiety which may be catalyzed by the methyltransferase encoded in the cluster. The flavin-dependent oxidoreductase might represent the dehydrogenase yielding the aldehyde in position 1 of arnamial and other melleolides. Finally, several halogenases, localized outside of the cluster, are able to catalyze the transfer of a single chlorine atom to the melleolide backbone, resulting in a 6'-chloromelleolide product. The protein is Delta(6)-protoilludene synthase of Armillaria gallica (Bulbous honey fungus).